A 476-amino-acid chain; its full sequence is Cytosolic Fe-S cluster assembly factor narfl (476 aa).

Positions 24, 71, 74, 77, 190, 246, 395, and 399 each coordinate [4Fe-4S] cluster.

The protein belongs to the NARF family. In terms of assembly, component of the CIA complex.

Its function is as follows. Component of the cytosolic iron-sulfur protein assembly (CIA) complex, a multiprotein complex that mediates the incorporation of iron-sulfur cluster into extramitochondrial Fe/S proteins. This Xenopus tropicalis (Western clawed frog) protein is Cytosolic Fe-S cluster assembly factor narfl (narfl).